Here is a 234-residue protein sequence, read N- to C-terminus: Phosphoribosylaminoimidazole-succinocarboxamide synthase (234 aa).

This sequence belongs to the SAICAR synthetase family.

It catalyses the reaction 5-amino-1-(5-phospho-D-ribosyl)imidazole-4-carboxylate + L-aspartate + ATP = (2S)-2-[5-amino-1-(5-phospho-beta-D-ribosyl)imidazole-4-carboxamido]succinate + ADP + phosphate + 2 H(+). Its pathway is purine metabolism; IMP biosynthesis via de novo pathway; 5-amino-1-(5-phospho-D-ribosyl)imidazole-4-carboxamide from 5-amino-1-(5-phospho-D-ribosyl)imidazole-4-carboxylate: step 1/2. The chain is Phosphoribosylaminoimidazole-succinocarboxamide synthase from Staphylococcus aureus (strain MRSA252).